Reading from the N-terminus, the 244-residue chain is Cell division protein ZapD (244 aa).

Belongs to the ZapD family. Interacts with FtsZ.

The protein resides in the cytoplasm. In terms of biological role, cell division factor that enhances FtsZ-ring assembly. Directly interacts with FtsZ and promotes bundling of FtsZ protofilaments, with a reduction in FtsZ GTPase activity. The protein is Cell division protein ZapD of Shewanella oneidensis (strain ATCC 700550 / JCM 31522 / CIP 106686 / LMG 19005 / NCIMB 14063 / MR-1).